Here is a 151-residue protein sequence, read N- to C-terminus: Large ribosomal subunit protein bL9 (151 aa).

The protein belongs to the bacterial ribosomal protein bL9 family.

Its function is as follows. Binds to the 23S rRNA. The polypeptide is Large ribosomal subunit protein bL9 (Mycolicibacterium vanbaalenii (strain DSM 7251 / JCM 13017 / BCRC 16820 / KCTC 9966 / NRRL B-24157 / PYR-1) (Mycobacterium vanbaalenii)).